A 361-amino-acid polypeptide reads, in one-letter code: Chorismate synthase (361 aa).

NADP(+) is bound by residues R48 and R54. FMN is bound by residues 125–127 (RSS), 238–239 (NA), G278, 293–297 (KPTSS), and R319.

Belongs to the chorismate synthase family. In terms of assembly, homotetramer. FMNH2 serves as cofactor.

The enzyme catalyses 5-O-(1-carboxyvinyl)-3-phosphoshikimate = chorismate + phosphate. Its pathway is metabolic intermediate biosynthesis; chorismate biosynthesis; chorismate from D-erythrose 4-phosphate and phosphoenolpyruvate: step 7/7. Its function is as follows. Catalyzes the anti-1,4-elimination of the C-3 phosphate and the C-6 proR hydrogen from 5-enolpyruvylshikimate-3-phosphate (EPSP) to yield chorismate, which is the branch point compound that serves as the starting substrate for the three terminal pathways of aromatic amino acid biosynthesis. This reaction introduces a second double bond into the aromatic ring system. This chain is Chorismate synthase, found in Proteus mirabilis (strain HI4320).